A 143-amino-acid chain; its full sequence is Nucleoside diphosphate kinase (143 aa).

Residues Lys-11, Phe-59, Arg-87, Thr-93, Arg-104, and Asn-114 each coordinate ATP. Residue His-117 is the Pros-phosphohistidine intermediate of the active site.

This sequence belongs to the NDK family. As to quaternary structure, homotetramer. Requires Mg(2+) as cofactor.

It is found in the cytoplasm. The catalysed reaction is a 2'-deoxyribonucleoside 5'-diphosphate + ATP = a 2'-deoxyribonucleoside 5'-triphosphate + ADP. It carries out the reaction a ribonucleoside 5'-diphosphate + ATP = a ribonucleoside 5'-triphosphate + ADP. Its function is as follows. Major role in the synthesis of nucleoside triphosphates other than ATP. The ATP gamma phosphate is transferred to the NDP beta phosphate via a ping-pong mechanism, using a phosphorylated active-site intermediate. The polypeptide is Nucleoside diphosphate kinase (Citrobacter koseri (strain ATCC BAA-895 / CDC 4225-83 / SGSC4696)).